Consider the following 89-residue polypeptide: Large ribosomal subunit protein uL29c (89 aa).

This sequence belongs to the universal ribosomal protein uL29 family.

The protein resides in the plastid. Its subcellular location is the chloroplast. The protein is Large ribosomal subunit protein uL29c (rpl29) of Trieres chinensis (Marine centric diatom).